Here is a 714-residue protein sequence, read N- to C-terminus: T-cell activation Rho GTPase-activating protein (714 aa).

The 190-residue stretch at 88–277 (QPLSIICGEN…FLIDNCFEIF (190 aa)) folds into the Rho-GAP domain. Disordered regions lie at residues 290–357 (DDSL…ESSV), 370–419 (QDRR…AEDP), 451–508 (QGHI…HSMS), 520–563 (RTSS…QSQT), and 623–650 (KPSTAVPPVPSHHGGDLSEGTPGGHRLS). Residues 299–311 (SDVSTLQNDSAYD) show a composition bias toward polar residues. The residue at position 398 (Ser-398) is a Phosphoserine. Residues 459–471 (SRSSPGESLGSSP) show a composition bias toward low complexity. Basic and acidic residues-rich tracts occupy residues 492–501 (KTDKTKPQRE) and 527–545 (EKSKDFSRDQLQKDLRKES).

Highly expressed in testis.

Its function is as follows. May function as a GTPase-activating protein. May play a role in transmission ratio distortion (TRD) in mouse, in which heterozygous males for t-locus transmit their t-carrying chromosome to 95% or more of their offspring. This chain is T-cell activation Rho GTPase-activating protein (Tagap), found in Mus musculus (Mouse).